Reading from the N-terminus, the 124-residue chain is Tax1-binding protein 3 homolog (124 aa).

The PDZ domain occupies 18 to 106 (AVELHKQEVI…DRAVKFIKQS (89 aa)).

Its function is as follows. May regulate a number of protein-protein interactions by competing for PDZ domain binding sites. The chain is Tax1-binding protein 3 homolog from Caenorhabditis elegans.